A 155-amino-acid chain; its full sequence is Small ribosomal subunit protein uS7c (155 aa).

It belongs to the universal ribosomal protein uS7 family. As to quaternary structure, part of the 30S ribosomal subunit.

The protein localises to the plastid. It is found in the chloroplast. In terms of biological role, one of the primary rRNA binding proteins, it binds directly to 16S rRNA where it nucleates assembly of the head domain of the 30S subunit. In Coelogyne cristata (Orchid), this protein is Small ribosomal subunit protein uS7c (rps7).